Here is a 746-residue protein sequence, read N- to C-terminus: NAD(P)H-quinone oxidoreductase subunit 5, chloroplastic (746 aa).

Transmembrane regions (helical) follow at residues Trp-9–Phe-29, Trp-40–Ile-60, Ile-89–Ile-109, Phe-125–Ile-145, Val-147–Thr-167, Gly-185–Phe-205, Val-221–Ser-241, Thr-258–Ala-278, Leu-280–Ile-300, Leu-327–Ile-347, Ala-354–Ser-374, Thr-396–Ser-416, Phe-425–Tyr-445, Ile-547–Pro-567, Phe-608–Tyr-628, and Tyr-723–Phe-743.

Belongs to the complex I subunit 5 family. NDH is composed of at least 16 different subunits, 5 of which are encoded in the nucleus.

The protein localises to the plastid. The protein resides in the chloroplast thylakoid membrane. The enzyme catalyses a plastoquinone + NADH + (n+1) H(+)(in) = a plastoquinol + NAD(+) + n H(+)(out). It catalyses the reaction a plastoquinone + NADPH + (n+1) H(+)(in) = a plastoquinol + NADP(+) + n H(+)(out). Functionally, NDH shuttles electrons from NAD(P)H:plastoquinone, via FMN and iron-sulfur (Fe-S) centers, to quinones in the photosynthetic chain and possibly in a chloroplast respiratory chain. The immediate electron acceptor for the enzyme in this species is believed to be plastoquinone. Couples the redox reaction to proton translocation, and thus conserves the redox energy in a proton gradient. The polypeptide is NAD(P)H-quinone oxidoreductase subunit 5, chloroplastic (ndhF) (Lobularia maritima (Sweet alyssum)).